The chain runs to 1367 residues: Insulin-like growth factor 1 receptor (1367 aa).

The N-terminal stretch at 1–30 (MKSGSGGGSPTSLWGLLFLSAALSLWPTSG) is a signal peptide. A disulfide bond links cysteine 33 and cysteine 52. Asparagine 51, asparagine 102, and asparagine 135 each carry an N-linked (GlcNAc...) asparagine glycan. 13 cysteine pairs are disulfide-bonded: cysteine 150-cysteine 178, cysteine 182-cysteine 205, cysteine 192-cysteine 211, cysteine 215-cysteine 224, cysteine 219-cysteine 230, cysteine 231-cysteine 239, cysteine 235-cysteine 248, cysteine 251-cysteine 260, cysteine 264-cysteine 276, cysteine 282-cysteine 303, cysteine 307-cysteine 321, cysteine 324-cysteine 328, and cysteine 332-cysteine 353. A glycan (N-linked (GlcNAc...) asparagine) is linked at asparagine 244. Asparagine 314 carries N-linked (GlcNAc...) asparagine glycosylation. Residues asparagine 417 and asparagine 438 are each glycosylated (N-linked (GlcNAc...) asparagine). Cysteine 455 and cysteine 488 form a disulfide bridge. 4 Fibronectin type-III domains span residues 491 to 609 (DVLH…TNAS), 610 to 708 (VPSI…TEAE), 735 to 828 (PERK…TMPA), and 834 to 927 (IPGP…VQAK). Residues asparagine 534, asparagine 607, asparagine 622, asparagine 640, asparagine 747, asparagine 756, asparagine 764, asparagine 900, and asparagine 913 are each glycosylated (N-linked (GlcNAc...) asparagine). Topologically, residues 741–935 (DVMQVANTTM…AKTGYENFIH (195 aa)) are extracellular. The chain crosses the membrane as a helical span at residues 936–959 (LIIALPVAVLLIVGGLVIMLYVFH). Residues 960–1367 (RKRNNSRLGN…ALPLPQSSTC (408 aa)) are Cytoplasmic-facing. Positions 977 to 980 (NPEY) match the IRS1- and SHC1-binding motif. Tyrosine 980 is modified (phosphotyrosine). In terms of domain architecture, Protein kinase spans 999–1274 (ITMSRELGQG…SIKEEMEPGF (276 aa)). ATP-binding positions include 1005–1013 (LGQGSFGMV) and lysine 1033. The active-site Proton acceptor is the aspartate 1135. Phosphotyrosine; by autocatalysis is present on residues tyrosine 1161, tyrosine 1165, and tyrosine 1166. Glycyl lysine isopeptide (Lys-Gly) (interchain with G-Cter in ubiquitin) cross-links involve residues lysine 1168 and lysine 1171. Serine 1278 is modified (phosphoserine; by GSK3-beta). Position 1282 is a phosphoserine (serine 1282). The segment at 1288-1367 (PEPEELDLEP…ALPLPQSSTC (80 aa)) is disordered. The span at 1290–1299 (PEELDLEPEN) shows a compositional bias: acidic residues. A compositionally biased stretch (low complexity) spans 1300-1316 (MESVPLDPSASSSSLPL). Positions 1317–1326 (PDRHSGHKAE) are enriched in basic and acidic residues.

This sequence belongs to the protein kinase superfamily. Tyr protein kinase family. Insulin receptor subfamily. Tetramer of 2 alpha and 2 beta chains linked by disulfide bonds. The alpha chains contribute to the formation of the ligand-binding domain, while the beta chain carries the kinase domain. Interacts with PIK3R1 and with the PTB/PID domains of IRS1 and SHC1 in vitro when autophosphorylated on tyrosine residues. Forms a hybrid receptor with INSR, the hybrid is a tetramer consisting of 1 alpha chain and 1 beta chain of INSR and 1 alpha chain and 1 beta chain of IGF1R. Interacts with ARRB1 and ARRB2. Interacts with GRB10. Interacts with RACK1. Interacts with SOCS1, SOCS2 and SOCS3. Interacts with 14-3-3 proteins. Interacts with NMD2. Interacts with MAP3K5. Interacts with STAT3. Found in a ternary complex with IGF1 and ITGAV:ITGB3 or ITGA6:ITGB4. Interacts (nascent precursor form) with ZFAND2B. In terms of assembly, (Microbial infection) Interacts with human respiratory syncytial virus (HRSV) fusion glycoprotein F1/F2 heterodimer. Post-translationally, autophosphorylated on tyrosine residues in response to ligand binding. Autophosphorylation occurs in trans, i.e. one subunit of the dimeric receptor phosphorylates tyrosine residues on the other subunit. Autophosphorylation occurs in a sequential manner; Tyr-1165 is predominantly phosphorylated first, followed by phosphorylation of Tyr-1161 and Tyr-1166. While every single phosphorylation increases kinase activity, all three tyrosine residues in the kinase activation loop (Tyr-1165, Tyr-1161 and Tyr-1166) have to be phosphorylated for optimal activity. Can be autophosphorylated at additional tyrosine residues (in vitro). Autophosphorylated is followed by phosphorylation of juxtamembrane tyrosines and C-terminal serines. May also be phosphorylated at Tyr-1161 and Tyr-1166 by mTORC2. Phosphorylation of Tyr-980 is required for IRS1- and SHC1-binding. Phosphorylation of Ser-1278 by GSK-3beta restrains kinase activity and promotes cell surface expression, it requires a priming phosphorylation at Ser-1282. Dephosphorylated by PTPN1. Polyubiquitinated at Lys-1168 and Lys-1171 through both 'Lys-48' and 'Lys-29' linkages, promoting receptor endocytosis and subsequent degradation by the proteasome. Ubiquitination is facilitated by pre-existing phosphorylation. In terms of processing, sumoylated with SUMO1. Post-translationally, controlled by regulated intramembrane proteolysis (RIP). Undergoes metalloprotease-dependent constitutive ectodomain shedding to produce a membrane-anchored 52 kDa C-Terminal fragment which is further processed by presenilin gamma-secretase to yield an intracellular 50 kDa fragment. In terms of tissue distribution, found as a hybrid receptor with INSR in muscle, heart, kidney, adipose tissue, skeletal muscle, hepatoma, fibroblasts, spleen and placenta (at protein level). Expressed in a variety of tissues. Overexpressed in tumors, including melanomas, cancers of the colon, pancreas prostate and kidney.

It is found in the cell membrane. It carries out the reaction L-tyrosyl-[protein] + ATP = O-phospho-L-tyrosyl-[protein] + ADP + H(+). Its activity is regulated as follows. Activated by autophosphorylation at Tyr-1165, Tyr-1161 and Tyr-1166 on the kinase activation loop; phosphorylation at all three tyrosine residues is required for optimal kinase activity. Inhibited by MSC1609119A-1, BMS-754807, PQIP, benzimidazole pyridinone, isoquinolinedione, bis-azaindole, 3-cyanoquinoline, 2,4-bis-arylamino-1,3-pyrimidine, pyrrolopyrimidine, pyrrole-5-carboxaldehyde, picropodophyllin (PPP), tyrphostin derivatives. While most inhibitors bind to the ATP binding pocket, MSC1609119A-1 functions as allosteric inhibitor and binds close to the DFG motif and the activation loop. Functionally, receptor tyrosine kinase which mediates actions of insulin-like growth factor 1 (IGF1). Binds IGF1 with high affinity and IGF2 and insulin (INS) with a lower affinity. The activated IGF1R is involved in cell growth and survival control. IGF1R is crucial for tumor transformation and survival of malignant cell. Ligand binding activates the receptor kinase, leading to receptor autophosphorylation, and tyrosines phosphorylation of multiple substrates, that function as signaling adapter proteins including, the insulin-receptor substrates (IRS1/2), Shc and 14-3-3 proteins. Phosphorylation of IRSs proteins lead to the activation of two main signaling pathways: the PI3K-AKT/PKB pathway and the Ras-MAPK pathway. The result of activating the MAPK pathway is increased cellular proliferation, whereas activating the PI3K pathway inhibits apoptosis and stimulates protein synthesis. Phosphorylated IRS1 can activate the 85 kDa regulatory subunit of PI3K (PIK3R1), leading to activation of several downstream substrates, including protein AKT/PKB. AKT phosphorylation, in turn, enhances protein synthesis through mTOR activation and triggers the antiapoptotic effects of IGFIR through phosphorylation and inactivation of BAD. In parallel to PI3K-driven signaling, recruitment of Grb2/SOS by phosphorylated IRS1 or Shc leads to recruitment of Ras and activation of the ras-MAPK pathway. In addition to these two main signaling pathways IGF1R signals also through the Janus kinase/signal transducer and activator of transcription pathway (JAK/STAT). Phosphorylation of JAK proteins can lead to phosphorylation/activation of signal transducers and activators of transcription (STAT) proteins. In particular activation of STAT3, may be essential for the transforming activity of IGF1R. The JAK/STAT pathway activates gene transcription and may be responsible for the transforming activity. JNK kinases can also be activated by the IGF1R. IGF1 exerts inhibiting activities on JNK activation via phosphorylation and inhibition of MAP3K5/ASK1, which is able to directly associate with the IGF1R. In terms of biological role, when present in a hybrid receptor with INSR, binds IGF1. PubMed:12138094 shows that hybrid receptors composed of IGF1R and INSR isoform Long are activated with a high affinity by IGF1, with low affinity by IGF2 and not significantly activated by insulin, and that hybrid receptors composed of IGF1R and INSR isoform Short are activated by IGF1, IGF2 and insulin. In contrast, PubMed:16831875 shows that hybrid receptors composed of IGF1R and INSR isoform Long and hybrid receptors composed of IGF1R and INSR isoform Short have similar binding characteristics, both bind IGF1 and have a low affinity for insulin. In Homo sapiens (Human), this protein is Insulin-like growth factor 1 receptor (IGF1R).